We begin with the raw amino-acid sequence, 183 residues long: Ribosome rescue factor SmrB (183 aa).

The region spanning 98–173 (LDLHGLTQLQ…GDAALLVLIE (76 aa)) is the Smr domain.

This sequence belongs to the SmrB family. In terms of assembly, associates with collided ribosomes, but not with correctly translating polysomes.

Acts as a ribosome collision sensor. Detects stalled/collided disomes (pairs of ribosomes where the leading ribosome is stalled and a second ribosome has collided with it) and endonucleolytically cleaves mRNA at the 5' boundary of the stalled ribosome. Stalled/collided disomes form a new interface (primarily via the 30S subunits) that binds SmrB. Cleaved mRNA becomes available for tmRNA ligation, leading to ribosomal subunit dissociation and rescue of stalled ribosomes. This Escherichia coli (strain 55989 / EAEC) protein is Ribosome rescue factor SmrB.